The primary structure comprises 445 residues: Cholesterol side-chain cleavage enzyme, mitochondrial (445 aa).

Residues 1 to 36 (RGLPSRSVFLRGCQASLSTAQERLGHPGVPTREGVR) constitute a mitochondrion transit peptide.

Belongs to the cytochrome P450 family. As to quaternary structure, interacts with FDX1/adrenodoxin. Requires heme as cofactor.

It localises to the mitochondrion inner membrane. It carries out the reaction 6 reduced [adrenodoxin] + cholesterol + 3 O2 + 6 H(+) = 4-methylpentanal + pregnenolone + 6 oxidized [adrenodoxin] + 4 H2O. The catalysed reaction is 2 reduced [adrenodoxin] + cholesterol + O2 + 2 H(+) = (22R)-hydroxycholesterol + 2 oxidized [adrenodoxin] + H2O. The enzyme catalyses (22R)-hydroxycholesterol + 2 reduced [adrenodoxin] + O2 + 2 H(+) = (20R,22R)-20,22-dihydroxycholesterol + 2 oxidized [adrenodoxin] + H2O. It catalyses the reaction (20R,22R)-20,22-dihydroxycholesterol + 2 reduced [adrenodoxin] + O2 + 2 H(+) = 4-methylpentanal + pregnenolone + 2 oxidized [adrenodoxin] + 2 H2O. It participates in lipid metabolism; C21-steroid hormone metabolism. The protein operates within steroid metabolism; cholesterol metabolism. In terms of biological role, a cytochrome P450 monooxygenase that catalyzes the side-chain hydroxylation and cleavage of cholesterol to pregnenolone, the precursor of most steroid hormones. Catalyzes three sequential oxidation reactions of cholesterol, namely the hydroxylation at C22 followed with the hydroxylation at C20 to yield 20R,22R-hydroxycholesterol that is further cleaved between C20 and C22 to yield the C21-steroid pregnenolone and 4-methylpentanal. Mechanistically, uses molecular oxygen inserting one oxygen atom into a substrate and reducing the second into a water molecule. Two electrons are provided by NADPH via a two-protein mitochondrial transfer system comprising flavoprotein FDXR (adrenodoxin/ferredoxin reductase) and nonheme iron-sulfur protein FDX1 or FDX2 (adrenodoxin/ferredoxin). In Oryctolagus cuniculus (Rabbit), this protein is Cholesterol side-chain cleavage enzyme, mitochondrial (CYP11A1).